We begin with the raw amino-acid sequence, 216 residues long: Uracil phosphoribosyltransferase (216 aa).

GTP contacts are provided by residues Arg-32, Arg-41, 75–78 (MGKI), and Lys-77. Ser-82 is subject to Phosphoserine. Arg-85 contacts 5-phospho-alpha-D-ribose 1-diphosphate. Arg-102 contacts GTP. 5-phospho-alpha-D-ribose 1-diphosphate is bound at residue Arg-110. Arg-131 contributes to the GTP binding site. 5-phospho-alpha-D-ribose 1-diphosphate contacts are provided by residues Asp-137 and 137–145 (DPMLATGGS). D-ribose 5-phosphate is bound at residue Tyr-201. Residues Leu-202 and 207-209 (GDF) each bind uracil. Position 208 (Asp-208) interacts with 5-phospho-alpha-D-ribose 1-diphosphate.

The protein belongs to the UPRTase family. It depends on Mg(2+) as a cofactor.

The enzyme catalyses UMP + diphosphate = 5-phospho-alpha-D-ribose 1-diphosphate + uracil. It participates in pyrimidine metabolism; UMP biosynthesis via salvage pathway; UMP from uracil: step 1/1. With respect to regulation, allosterically activated by GTP. Functionally, catalyzes the conversion of uracil and 5-phospho-alpha-D-ribose 1-diphosphate (PRPP) to UMP and diphosphate in the pyrimidine salvage pathway. This is Uracil phosphoribosyltransferase (FUR1) from Saccharomyces cerevisiae (strain ATCC 204508 / S288c) (Baker's yeast).